The sequence spans 92 residues: Small ribosomal subunit protein uS19c (92 aa).

Belongs to the universal ribosomal protein uS19 family.

The protein localises to the plastid. The protein resides in the chloroplast. Its function is as follows. Protein S19 forms a complex with S13 that binds strongly to the 16S ribosomal RNA. This chain is Small ribosomal subunit protein uS19c, found in Ostreococcus tauri.